The following is a 380-amino-acid chain: 1-deoxy-D-xylulose 5-phosphate reductoisomerase (380 aa).

The NADPH site is built by Ser-10, Gly-11, Ser-12, Ile-13, Gly-36, Lys-37, Asn-38, and Asn-120. Lys-121 provides a ligand contact to 1-deoxy-D-xylulose 5-phosphate. NADPH is bound at residue Glu-122. Residue Asp-146 participates in Mn(2+) binding. Residues Ser-147, Glu-148, Ser-172, and His-195 each contribute to the 1-deoxy-D-xylulose 5-phosphate site. Residue Glu-148 participates in Mn(2+) binding. Gly-201 is an NADPH binding site. 1-deoxy-D-xylulose 5-phosphate-binding residues include Ser-208, Asn-213, Lys-214, and Glu-217. Position 217 (Glu-217) interacts with Mn(2+).

The protein belongs to the DXR family. The cofactor is Mg(2+). Mn(2+) serves as cofactor.

The enzyme catalyses 2-C-methyl-D-erythritol 4-phosphate + NADP(+) = 1-deoxy-D-xylulose 5-phosphate + NADPH + H(+). Its pathway is isoprenoid biosynthesis; isopentenyl diphosphate biosynthesis via DXP pathway; isopentenyl diphosphate from 1-deoxy-D-xylulose 5-phosphate: step 1/6. Its function is as follows. Catalyzes the NADPH-dependent rearrangement and reduction of 1-deoxy-D-xylulose-5-phosphate (DXP) to 2-C-methyl-D-erythritol 4-phosphate (MEP). The sequence is that of 1-deoxy-D-xylulose 5-phosphate reductoisomerase from Bacillus cereus (strain ATCC 10987 / NRS 248).